We begin with the raw amino-acid sequence, 334 residues long: Holliday junction branch migration complex subunit RuvB (334 aa).

The tract at residues Ala-4 to Tyr-184 is large ATPase domain (RuvB-L). ATP-binding positions include Ile-23, Arg-24, Gly-65, Lys-68, Thr-69, Thr-70, Glu-131 to Tyr-133, Arg-174, Tyr-184, and Arg-221. Thr-69 contacts Mg(2+). Residues Gln-185–Asn-255 form a small ATPAse domain (RuvB-S) region. A head domain (RuvB-H) region spans residues Ala-258–Glu-334. 3 residues coordinate DNA: Arg-294, Arg-313, and Arg-318.

The protein belongs to the RuvB family. Homohexamer. Forms an RuvA(8)-RuvB(12)-Holliday junction (HJ) complex. HJ DNA is sandwiched between 2 RuvA tetramers; dsDNA enters through RuvA and exits via RuvB. An RuvB hexamer assembles on each DNA strand where it exits the tetramer. Each RuvB hexamer is contacted by two RuvA subunits (via domain III) on 2 adjacent RuvB subunits; this complex drives branch migration. In the full resolvosome a probable DNA-RuvA(4)-RuvB(12)-RuvC(2) complex forms which resolves the HJ.

It is found in the cytoplasm. It catalyses the reaction ATP + H2O = ADP + phosphate + H(+). Its function is as follows. The RuvA-RuvB-RuvC complex processes Holliday junction (HJ) DNA during genetic recombination and DNA repair, while the RuvA-RuvB complex plays an important role in the rescue of blocked DNA replication forks via replication fork reversal (RFR). RuvA specifically binds to HJ cruciform DNA, conferring on it an open structure. The RuvB hexamer acts as an ATP-dependent pump, pulling dsDNA into and through the RuvAB complex. RuvB forms 2 homohexamers on either side of HJ DNA bound by 1 or 2 RuvA tetramers; 4 subunits per hexamer contact DNA at a time. Coordinated motions by a converter formed by DNA-disengaged RuvB subunits stimulates ATP hydrolysis and nucleotide exchange. Immobilization of the converter enables RuvB to convert the ATP-contained energy into a lever motion, pulling 2 nucleotides of DNA out of the RuvA tetramer per ATP hydrolyzed, thus driving DNA branch migration. The RuvB motors rotate together with the DNA substrate, which together with the progressing nucleotide cycle form the mechanistic basis for DNA recombination by continuous HJ branch migration. Branch migration allows RuvC to scan DNA until it finds its consensus sequence, where it cleaves and resolves cruciform DNA. The polypeptide is Holliday junction branch migration complex subunit RuvB (Serratia proteamaculans (strain 568)).